A 348-amino-acid chain; its full sequence is Holliday junction branch migration complex subunit RuvB (348 aa).

The interval 4–186 (TDRIISANTA…FGIIQRLEFY (183 aa)) is large ATPase domain (RuvB-L). Residues isoleucine 25, arginine 26, glycine 67, lysine 70, threonine 71, threonine 72, 133 to 135 (EDY), arginine 176, tyrosine 186, and arginine 223 contribute to the ATP site. Threonine 71 contacts Mg(2+). The small ATPAse domain (RuvB-S) stretch occupies residues 187–257 (SIDDLSKIVY…IADKALSMLK (71 aa)). Residues 260–348 (PVGFDHMDHR…SADQQQTLSI (89 aa)) form a head domain (RuvB-H) region. DNA-binding residues include arginine 315 and arginine 320.

It belongs to the RuvB family. In terms of assembly, homohexamer. Forms an RuvA(8)-RuvB(12)-Holliday junction (HJ) complex. HJ DNA is sandwiched between 2 RuvA tetramers; dsDNA enters through RuvA and exits via RuvB. An RuvB hexamer assembles on each DNA strand where it exits the tetramer. Each RuvB hexamer is contacted by two RuvA subunits (via domain III) on 2 adjacent RuvB subunits; this complex drives branch migration. In the full resolvosome a probable DNA-RuvA(4)-RuvB(12)-RuvC(2) complex forms which resolves the HJ.

It localises to the cytoplasm. The enzyme catalyses ATP + H2O = ADP + phosphate + H(+). The RuvA-RuvB-RuvC complex processes Holliday junction (HJ) DNA during genetic recombination and DNA repair, while the RuvA-RuvB complex plays an important role in the rescue of blocked DNA replication forks via replication fork reversal (RFR). RuvA specifically binds to HJ cruciform DNA, conferring on it an open structure. The RuvB hexamer acts as an ATP-dependent pump, pulling dsDNA into and through the RuvAB complex. RuvB forms 2 homohexamers on either side of HJ DNA bound by 1 or 2 RuvA tetramers; 4 subunits per hexamer contact DNA at a time. Coordinated motions by a converter formed by DNA-disengaged RuvB subunits stimulates ATP hydrolysis and nucleotide exchange. Immobilization of the converter enables RuvB to convert the ATP-contained energy into a lever motion, pulling 2 nucleotides of DNA out of the RuvA tetramer per ATP hydrolyzed, thus driving DNA branch migration. The RuvB motors rotate together with the DNA substrate, which together with the progressing nucleotide cycle form the mechanistic basis for DNA recombination by continuous HJ branch migration. Branch migration allows RuvC to scan DNA until it finds its consensus sequence, where it cleaves and resolves cruciform DNA. This is Holliday junction branch migration complex subunit RuvB from Francisella tularensis subsp. tularensis (strain FSC 198).